The following is a 281-amino-acid chain: Protein EMBRYO DEFECTIVE 1674 (281 aa).

2 stretches are compositionally biased toward polar residues: residues 1-14 and 24-41; these read MTTT…QSLS and PNTS…PNSS. Residues 1 to 47 are disordered; it reads MTTTRAKSKFQSLSACRFTPLPEPNTSPSTYSKTLPKPNSSPGTDGT. The 88-residue stretch at 66–153 folds into the SANTA domain; sequence VTLSDWWLTK…LGFPYDWEDY (88 aa).

Its function is as follows. Required for normal embryo development. The sequence is that of Protein EMBRYO DEFECTIVE 1674 from Arabidopsis thaliana (Mouse-ear cress).